Here is a 319-residue protein sequence, read N- to C-terminus: Ribonuclease Z (319 aa).

H62, H64, D66, H67, H145, D215, and H273 together coordinate Zn(2+). D66 (proton acceptor) is an active-site residue.

It belongs to the RNase Z family. In terms of assembly, homodimer. Requires Zn(2+) as cofactor.

It catalyses the reaction Endonucleolytic cleavage of RNA, removing extra 3' nucleotides from tRNA precursor, generating 3' termini of tRNAs. A 3'-hydroxy group is left at the tRNA terminus and a 5'-phosphoryl group is left at the trailer molecule.. Zinc phosphodiesterase, which displays some tRNA 3'-processing endonuclease activity. Probably involved in tRNA maturation, by removing a 3'-trailer from precursor tRNA. The polypeptide is Ribonuclease Z (Borrelia hermsii (strain HS1 / DAH)).